We begin with the raw amino-acid sequence, 373 residues long: MSTAILVSLLRNGRCQVNRGALTLCFQKEHSCTTSTRHCFSANRRCFSSRFDLDGSGRPATWDSFGIWDNRIDEPIQLPPSIKYGKLIPHINLSKVGCSTQLGKRKENEDRFKLARLTPDILYFAVYDGHGGASAAEFCDRFMEDYIKEFLVEEHDMEKVLVKAFLEINKAFARHAHLSVDASLLTCGTTATVALLRDGIELVVASVGDSRALLCRRGKPFKLTIDHTPERKEEKLRIKKSGGFVTWNSLGQPNVNGRLAMTRSIGDLDLKSMGVIAEPETKRVKLQHTDDGFLVLTTDGINFIVNSQEICDIINQCHDPKEAAQVLTEQAIQYGTEDNSTAIVVPFGAWGKHKSSEVSFSFSRGFASSGRWD.

One can recognise a PPM-type phosphatase domain in the interval 95–347; it reads KVGCSTQLGK…DNSTAIVVPF (253 aa). The Mg(2+) site is built by Asp128, Gly129, and Asp338.

This sequence belongs to the PP2C family. Mg(2+) is required as a cofactor. The cofactor is Mn(2+).

It is found in the mitochondrion matrix. It carries out the reaction O-phospho-L-seryl-[protein] + H2O = L-seryl-[protein] + phosphate. The catalysed reaction is O-phospho-L-threonyl-[protein] + H2O = L-threonyl-[protein] + phosphate. The chain is Protein phosphatase 1K, mitochondrial (ppm1k) from Xenopus laevis (African clawed frog).